The sequence spans 261 residues: DNA repair protein RecO (261 aa).

This sequence belongs to the RecO family.

Its function is as follows. Involved in DNA repair and RecF pathway recombination. The sequence is that of DNA repair protein RecO from Chlorobium limicola (strain DSM 245 / NBRC 103803 / 6330).